The primary structure comprises 69 residues: U-Asilidin(12)-Dg3a (69 aa).

A signal peptide spans 1–19; sequence MRFLNIFLFFAAIIAFATA. Positions 20-33 are excised as a propeptide; that stretch reads SQVFEEDEIDMEPR. 3 cysteine pairs are disulfide-bonded: Cys36/Cys59, Cys45/Cys65, and Cys49/Cys67.

It belongs to the asilidin-12 family. As to expression, expressed by the venom gland.

It localises to the secreted. In terms of biological role, moderately increases Kv11.1/KCNH2/ERG1 currents and shifts the voltage-dependence of the channel activation to hyperpolarised potentials. In vivo, induces neurotoxic effects when injected into insects (tested on L.cuprina and A.domesticus). This is U-Asilidin(12)-Dg3a from Dolopus genitalis (Giant Australian assassin fly).